Here is a 660-residue protein sequence, read N- to C-terminus: ATPase-like fidgetin (660 aa).

2 disordered regions span residues 141–186 (KQIY…EDPF) and 209–334 (ALSS…ADSK). The span at 145–161 (SKHSPPSTSTSSIVSSS) shows a compositional bias: low complexity. Serine 177 is modified (phosphoserine). A compositionally biased stretch (polar residues) spans 213–239 (DTGRSATMNSTTFPTAMKSQSTTKPTL). Low complexity predominate over residues 240 to 255 (SNSVSSPSIQVSNNQN). A compositionally biased stretch (polar residues) spans 301 to 313 (LNSSHDTLGSSTR). Low complexity predominate over residues 314 to 333 (PSSADTAGSPATSPPATADS). ATP is bound at residue 419-426 (GPPGTGKT).

The protein belongs to the AAA ATPase family.

The protein resides in the nucleus. The chain is ATPase-like fidgetin (alf1) from Schizosaccharomyces pombe (strain 972 / ATCC 24843) (Fission yeast).